Reading from the N-terminus, the 128-residue chain is Large-conductance mechanosensitive channel (128 aa).

Transmembrane regions (helical) follow at residues 11-31 and 70-90; these read FALKGNVLDLAVAVVIGAAFG and GAFIQSIVDFVIIAFAIFIFV.

It belongs to the MscL family. Homopentamer.

The protein localises to the cell membrane. Its function is as follows. Channel that opens in response to stretch forces in the membrane lipid bilayer. May participate in the regulation of osmotic pressure changes within the cell. This is Large-conductance mechanosensitive channel from Listeria monocytogenes serotype 4b (strain CLIP80459).